A 772-amino-acid chain; its full sequence is Uracil catabolism protein 2 (772 aa).

The interval M1–F70 is disordered. Residues H39 to E51 are compositionally biased toward basic and acidic residues. Residues G59–T69 are compositionally biased toward basic residues. The segment at residues C72 to C101 is a DNA-binding region (zn(2)-C6 fungal-type).

The protein belongs to the URC2 family.

Its subcellular location is the cytoplasm. The protein localises to the nucleus. Probable transcriptional activator involved in uracil catabolism. This Saccharomyces cerevisiae (strain ATCC 204508 / S288c) (Baker's yeast) protein is Uracil catabolism protein 2 (URC2).